Consider the following 275-residue polypeptide: Large ribosomal subunit protein uL2 (275 aa).

The disordered stretch occupies residues 223 to 275; sequence VVMNPVDHPHGGGEGKSSGGRHPVSPWGMPTKGYKTRKNKGTDQYIVRRRNKK.

The protein belongs to the universal ribosomal protein uL2 family. Part of the 50S ribosomal subunit. Forms a bridge to the 30S subunit in the 70S ribosome.

One of the primary rRNA binding proteins. Required for association of the 30S and 50S subunits to form the 70S ribosome, for tRNA binding and peptide bond formation. It has been suggested to have peptidyltransferase activity; this is somewhat controversial. Makes several contacts with the 16S rRNA in the 70S ribosome. This chain is Large ribosomal subunit protein uL2, found in Psychromonas ingrahamii (strain DSM 17664 / CCUG 51855 / 37).